The sequence spans 389 residues: S-adenosylmethionine synthase (389 aa).

His17 provides a ligand contact to ATP. Asp19 provides a ligand contact to Mg(2+). Glu45 contacts K(+). L-methionine is bound by residues Glu58 and Gln101. A flexible loop region spans residues 101–111; the sequence is QSPDISQGVTE. Residues 168–170, 234–235, Asp243, 249–250, Ala266, and Lys270 each bind ATP; these read DSK, RF, and RK. Asp243 provides a ligand contact to L-methionine. L-methionine is bound at residue Lys274.

The protein belongs to the AdoMet synthase family. As to quaternary structure, homotetramer; dimer of dimers. The cofactor is Mg(2+). K(+) is required as a cofactor.

It localises to the cytoplasm. It carries out the reaction L-methionine + ATP + H2O = S-adenosyl-L-methionine + phosphate + diphosphate. The protein operates within amino-acid biosynthesis; S-adenosyl-L-methionine biosynthesis; S-adenosyl-L-methionine from L-methionine: step 1/1. Functionally, catalyzes the formation of S-adenosylmethionine (AdoMet) from methionine and ATP. The overall synthetic reaction is composed of two sequential steps, AdoMet formation and the subsequent tripolyphosphate hydrolysis which occurs prior to release of AdoMet from the enzyme. The sequence is that of S-adenosylmethionine synthase from Syntrophotalea carbinolica (strain DSM 2380 / NBRC 103641 / GraBd1) (Pelobacter carbinolicus).